We begin with the raw amino-acid sequence, 135 residues long: MLSPKRTRFRKHHRGRMKGISYRGNSICFGRYAIQALEPAWITSRQIEAGRRAMTRNARRGGKIWVRIFPDKPVTLRPTETRMGSGKGSPEYWVAVVKPGRILYEMSGVAENIARKAISIAASKMPIRTQFITSG.

The protein belongs to the universal ribosomal protein uL16 family. Part of the 50S ribosomal subunit.

Its subcellular location is the plastid. The protein localises to the chloroplast. The sequence is that of Large ribosomal subunit protein uL16c from Cucumis sativus (Cucumber).